Consider the following 165-residue polypeptide: Anaerobic nitrite reductase GLB1 (165 aa).

The 151-residue stretch at 12 to 162 folds into the Globin domain; that stretch reads VFGEEQEALV…LVAAIKREMK (151 aa). The short motif at 45 to 49 is the Homodimerization element; sequence EIAPS. Residues S55, K69, H73, R103, T107, and H108 each coordinate heme b. Residues 115–127 carry the Homodimerization motif; that stretch reads DGHFEVTGFALLE.

The protein belongs to the plant globin family. As to quaternary structure, homodimer. Heme b is required as a cofactor. In embryonic organs and at low levels in vegetative organs.

It localises to the cytoplasm. It is found in the nucleus. It carries out the reaction Fe(III)-heme b-[protein] + nitric oxide + H2O = Fe(II)-heme b-[protein] + nitrite + 2 H(+). In terms of biological role, phytoglobin that reduces nitrite to nitric oxide (NO) under anoxic conditions (e.g. during flooding or in waterlogged soil). May not function as an oxygen storage or transport protein. Has an unusually high affinity for O(2) through an hexacoordinate heme iron because of a very low dissociation constant. The chain is Anaerobic nitrite reductase GLB1 (HB) from Zea mays (Maize).